Here is a 530-residue protein sequence, read N- to C-terminus: Cytochrome P450 monooxygenase sttB (530 aa).

Asn-5 carries an N-linked (GlcNAc...) asparagine glycan. A helical membrane pass occupies residues 24-44; it reads LPILTVALLTGIASAVYINVS. The N-linked (GlcNAc...) asparagine glycan is linked to Asn-230.

The protein belongs to the cytochrome P450 family. Heme serves as cofactor.

The protein localises to the membrane. The enzyme catalyses preaspterpenacid acid I + reduced [NADPH--hemoprotein reductase] + O2 = preaspterpenacid acid II + oxidized [NADPH--hemoprotein reductase] + H2O + H(+). Its pathway is secondary metabolite biosynthesis; terpenoid biosynthesis. Cytochrome P450 monooxygenase; part of the gene cluster that mediates the biosynthesis of aspterpenacids. Performs the C22-oxidative modification of the terpene synthase sttA product preaspterpenacid I to produce preaspterpenacid II. It has still to be determined how preaspterpenacid II is further modified to produce aspterpenacids. The polypeptide is Cytochrome P450 monooxygenase sttB (Aspergillus terreus (strain NIH 2624 / FGSC A1156)).